Consider the following 181-residue polypeptide: ATP synthase subunit b (181 aa).

Residues 24–44 (LFPNLPNFIAHLLATIVLVIV) traverse the membrane as a helical segment.

Belongs to the ATPase B chain family. As to quaternary structure, F-type ATPases have 2 components, F(1) - the catalytic core - and F(0) - the membrane proton channel. F(1) has five subunits: alpha(3), beta(3), gamma(1), delta(1), epsilon(1). F(0) has three main subunits: a(1), b(2) and c(10-14). The alpha and beta chains form an alternating ring which encloses part of the gamma chain. F(1) is attached to F(0) by a central stalk formed by the gamma and epsilon chains, while a peripheral stalk is formed by the delta and b chains.

The protein resides in the cell membrane. Its function is as follows. F(1)F(0) ATP synthase produces ATP from ADP in the presence of a proton or sodium gradient. F-type ATPases consist of two structural domains, F(1) containing the extramembraneous catalytic core and F(0) containing the membrane proton channel, linked together by a central stalk and a peripheral stalk. During catalysis, ATP synthesis in the catalytic domain of F(1) is coupled via a rotary mechanism of the central stalk subunits to proton translocation. In terms of biological role, component of the F(0) channel, it forms part of the peripheral stalk, linking F(1) to F(0). In Mycoplasma capricolum subsp. capricolum (strain California kid / ATCC 27343 / NCTC 10154), this protein is ATP synthase subunit b.